Consider the following 351-residue polypeptide: Nicotinate-nucleotide--dimethylbenzimidazole phosphoribosyltransferase (351 aa).

The active-site Proton acceptor is the glutamate 318.

This sequence belongs to the CobT family.

The catalysed reaction is 5,6-dimethylbenzimidazole + nicotinate beta-D-ribonucleotide = alpha-ribazole 5'-phosphate + nicotinate + H(+). Its pathway is nucleoside biosynthesis; alpha-ribazole biosynthesis; alpha-ribazole from 5,6-dimethylbenzimidazole: step 1/2. Functionally, catalyzes the synthesis of alpha-ribazole-5'-phosphate from nicotinate mononucleotide (NAMN) and 5,6-dimethylbenzimidazole (DMB). This is Nicotinate-nucleotide--dimethylbenzimidazole phosphoribosyltransferase from Shewanella frigidimarina (strain NCIMB 400).